Reading from the N-terminus, the 245-residue chain is Carboxy-S-adenosyl-L-methionine synthase (245 aa).

S-adenosyl-L-methionine is bound by residues tyrosine 39, 64–66, 117–118, and arginine 199; these read GSS and DI.

Belongs to the class I-like SAM-binding methyltransferase superfamily. Cx-SAM synthase family. Homodimer.

It catalyses the reaction prephenate + S-adenosyl-L-methionine = carboxy-S-adenosyl-L-methionine + 3-phenylpyruvate + H2O. In terms of biological role, catalyzes the conversion of S-adenosyl-L-methionine (SAM) to carboxy-S-adenosyl-L-methionine (Cx-SAM). This chain is Carboxy-S-adenosyl-L-methionine synthase, found in Desulfotalea psychrophila (strain LSv54 / DSM 12343).